Reading from the N-terminus, the 404-residue chain is Probable tRNA sulfurtransferase (404 aa).

The THUMP domain occupies 60 to 165; sequence QPVVEALKLV…DEAAYISYEE (106 aa). Residues 183-184, 208-209, Arg265, Gly287, and Gln296 contribute to the ATP site; these read ML and HF.

Belongs to the ThiI family.

It is found in the cytoplasm. It catalyses the reaction [ThiI sulfur-carrier protein]-S-sulfanyl-L-cysteine + a uridine in tRNA + 2 reduced [2Fe-2S]-[ferredoxin] + ATP + H(+) = [ThiI sulfur-carrier protein]-L-cysteine + a 4-thiouridine in tRNA + 2 oxidized [2Fe-2S]-[ferredoxin] + AMP + diphosphate. It carries out the reaction [ThiS sulfur-carrier protein]-C-terminal Gly-Gly-AMP + S-sulfanyl-L-cysteinyl-[cysteine desulfurase] + AH2 = [ThiS sulfur-carrier protein]-C-terminal-Gly-aminoethanethioate + L-cysteinyl-[cysteine desulfurase] + A + AMP + 2 H(+). It participates in cofactor biosynthesis; thiamine diphosphate biosynthesis. In terms of biological role, catalyzes the ATP-dependent transfer of a sulfur to tRNA to produce 4-thiouridine in position 8 of tRNAs, which functions as a near-UV photosensor. Also catalyzes the transfer of sulfur to the sulfur carrier protein ThiS, forming ThiS-thiocarboxylate. This is a step in the synthesis of thiazole, in the thiamine biosynthesis pathway. The sulfur is donated as persulfide by IscS. In Streptococcus pyogenes serotype M6 (strain ATCC BAA-946 / MGAS10394), this protein is Probable tRNA sulfurtransferase.